We begin with the raw amino-acid sequence, 607 residues long: MAGFPGKEAGPPGGWRKCQEDESPENERHENFYAEIDDFAPSVLTPTGSDSGAGEEDDDGLYQVPTHWPPLMAPTGLSGERVPCRTQAAVTSNTGNSPGSRHTSCPFTLPRGAQPPAPAHQKPTAPTPKPRSRECGPSKTPDPFSWFRKTSCTEGGADSTSRSFMYQKGFEEGLAGLGLDDKSDCESEDESNFRRPSSHSALKQKNGGKGKPSGLFEHLAAHGREFSKLSKHAAQLKRLSGSVMNVLNLDDAQDTRQAKAQRKESMRVPIVTHLTNHVPVIKPACSLFLEGAPGVGKTTMLNHLKAVFGDLTIVVPEPMRYWTHVYENAIKAMHKNVTRARHGREDTSAEVLACQMKFTTPFRVLASRKRSLLVTESGARSVAPLDCWILHDRHLLSASVVFPLMLLRSQLLSYSDFIQVLATFTADPGDTIVWMKLNVEENMRRLKKRGRKHESGLDAGYLKSVNDAYHAVYCAWLLTQYFAPEDIVKVCAGLTTITTVCHQSHTPIIRSGVAEKLYKNSIFSVLKEVIQPFRADAVLLEVCLAFTRTLAYLQFVLVDLSEFQDDLPGCWTEIYMQALKNPAIRSQFFDWAGLSKVISDFERGNRD.

2 disordered regions span residues 1–160 (MAGF…ADST) and 180–215 (DDKS…PSGL). Positions 17–32 (KCQEDESPENERHENF) are enriched in basic and acidic residues. Polar residues-rich tracts occupy residues 88–106 (AAVT…TSCP), 148–160 (RKTS…ADST), and 194–203 (RRPSSHSALK). An ATP-binding site is contributed by 291–298 (GAPGVGKT). Glutamate 317 (proton acceptor) is an active-site residue. Position 355 (glutamine 355) interacts with substrate. Arginine 445 serves as a coordination point for ATP. Arginine 451 contributes to the substrate binding site.

This sequence belongs to the herpesviridae thymidine kinase family. Homodimer.

Its subcellular location is the virion tegument. The protein resides in the host nucleus. It catalyses the reaction thymidine + ATP = dTMP + ADP + H(+). Functionally, catalyzes the transfer of the gamma-phospho group of ATP to thymidine to generate dTMP in the salvage pathway of pyrimidine synthesis. The dTMP serves as a substrate for DNA polymerase during viral DNA replication. Allows the virus to be reactivated and to grow in non-proliferative cells lacking a high concentration of phosphorylated nucleic acid precursors. The protein is Thymidine kinase of Homo sapiens (Human).